The chain runs to 114 residues: Nascent polypeptide-associated complex protein (114 aa).

An NAC-A/B domain is found at 5–69 (PSQFKNLERM…AKEAQKEEPK (65 aa)).

It belongs to the NAC-alpha family. As to quaternary structure, homodimer. Interacts with the ribosome. Binds ribosomal RNA.

Functionally, contacts the emerging nascent chain on the ribosome. The sequence is that of Nascent polypeptide-associated complex protein from Sulfurisphaera tokodaii (strain DSM 16993 / JCM 10545 / NBRC 100140 / 7) (Sulfolobus tokodaii).